The sequence spans 51 residues: Insulin-1 (51 aa).

3 disulfide bridges follow: C8-C37, C20-C50, and C36-C41.

This sequence belongs to the insulin family. As to quaternary structure, heterodimer of a B chain and an A chain linked by two disulfide bonds.

Its subcellular location is the secreted. In terms of biological role, insulin decreases blood glucose concentration. It increases cell permeability to monosaccharides, amino acids and fatty acids. It accelerates glycolysis, the pentose phosphate cycle, and glycogen synthesis in liver. The polypeptide is Insulin-1 (ins1) (Batrachoididae sp. (Toadfish)).